A 201-amino-acid polypeptide reads, in one-letter code: LexA repressor (201 aa).

The H-T-H motif DNA-binding region spans 28–48 (RAEIANQLGFRSANAAEEHLK). Active-site for autocatalytic cleavage activity residues include serine 118 and lysine 155.

The protein belongs to the peptidase S24 family. In terms of assembly, homodimer.

The enzyme catalyses Hydrolysis of Ala-|-Gly bond in repressor LexA.. In terms of biological role, represses a number of genes involved in the response to DNA damage (SOS response), including recA and lexA. In the presence of single-stranded DNA, RecA interacts with LexA causing an autocatalytic cleavage which disrupts the DNA-binding part of LexA, leading to derepression of the SOS regulon and eventually DNA repair. The sequence is that of LexA repressor from Saccharophagus degradans (strain 2-40 / ATCC 43961 / DSM 17024).